The chain runs to 119 residues: Hisactophilin-3 (119 aa).

Gly-2 is lipidated: N-myristoyl glycine. Residues 8–110 form a contains several HHXH repeats region; it reads SHHGHFLSAE…SIYTTHHHHH (103 aa). 2 repeat units span residues 34-47 and 75-87. Positions 34 to 87 are 2 X 13 AA approximate repeats; the sequence is FHVENHGHHKVAIRTHANKYVSINDNNDVYISHHFHGEHSLFHLEHHGGKVSIK.

The protein belongs to the hisactophilin family. In terms of processing, phosphorylated.

It localises to the cytoplasm. The protein resides in the cell membrane. In terms of biological role, may act as an intracellular pH sensor that links chemotactic signals to responses in the microfilament system of the cells by nucleating actin polymerization or stabilizing the filaments. This is Hisactophilin-3 (hatC) from Dictyostelium discoideum (Social amoeba).